The sequence spans 228 residues: NOI-like protein (228 aa).

Basic and acidic residues predominate over residues 56–75; the sequence is AQDHQHSEKHHNDTSTDYHV. 2 disordered regions span residues 56–87 and 99–133; these read AQDH…HRRE and RPHR…RNSD. Residues 76–86 are compositionally biased toward basic residues; it reads VKQHRRKHHRR. Over residues 118 to 133 the composition is skewed to polar residues; it reads HGTSATMSSSVKRNSD.

This sequence belongs to the RIN4 family.

The polypeptide is NOI-like protein (Elaeis oleifera (American oil palm)).